Consider the following 295-residue polypeptide: G1/S-specific cyclin-D1 (295 aa).

A Cyclin N-terminal domain is found at 28 to 152 (LRAMLKTEET…LLVNKLKWNL (125 aa)). The disordered stretch occupies residues 262-283 (AQQNVDPKATEEEGEVEEEAGL). Residue Lys-269 forms a Glycyl lysine isopeptide (Lys-Gly) (interchain with G-Cter in ubiquitin) linkage. Thr-286 is subject to Phosphothreonine.

The protein belongs to the cyclin family. Cyclin D subfamily. In terms of assembly, interacts with either CDK4 or CDK6 protein kinase to form a serine/threonine kinase holoenzyme complex. The cyclin subunit imparts substrate specificity to the complex. Component of the ternary complex CCND1/CDK4/CDKN1B required for nuclear translocation and modulation of CDK4-mediated kinase activity. Interacts directly with CDKN1B. Can form similar complexes with either CDKN1A or CDKN2A. Interacts with UHRF2; the interaction ubiquitinates CCND1 and appears to occur independently of phosphorylation. Interacts with USP2. Interacts (via cyclin N-terminal domain) with INSM1 (via N-terminal region); the interaction competes with the binding of CCND1 to CDK4 during cell cycle progression and inhibits CDK4 activity. Interacts with CDK4; the interaction is prevented with the binding of CCND1 to INSM1 during cell cycle progression. In terms of processing, phosphorylation at Thr-286 by MAP kinases is required for ubiquitination and degradation by the DCX(AMBRA1) complex. It also plays an essential role for recognition by the FBXO31 component of SCF (SKP1-cullin-F-box) protein ligase complex following DNA damage. Post-translationally, ubiquitinated at Lys-269 by the DCX(AMBRA1) complex during the transition from G1 to S cell phase, leading to its degradation: ubiquitination is dependent on Thr-286 phosphorylation. The DCX(AMBRA1) complex represents the major regulator of CCND1 stability during the G1/S transition. Also ubiquitinated by the SCF(FBXO4) and Cul7-RING(FBXW8) ubiquitin-protein ligase complexes. Following DNA damage it is ubiquitinated by the SCF(FBXO31) protein ligase complex. SCF(FBXO31) ubiquitination is dependent on Thr-286 phosphorylation. Ubiquitinated also by UHRF2 apparently in a phosphorylation-independent manner. Ubiquitination leads to its degradation and G1 arrest. Deubiquitinated by USP2; leading to its stabilization. As to expression, expressed in the intestinal epithelium.

The protein resides in the nucleus. Its subcellular location is the cytoplasm. It localises to the nucleus membrane. Its function is as follows. Regulatory component of the cyclin D1-CDK4 (DC) complex that phosphorylates and inhibits members of the retinoblastoma (RB) protein family including RB1 and regulates the cell-cycle during G(1)/S transition. Phosphorylation of RB1 allows dissociation of the transcription factor E2F from the RB/E2F complex and the subsequent transcription of E2F target genes which are responsible for the progression through the G(1) phase. Hypophosphorylates RB1 in early G(1) phase. Cyclin D-CDK4 complexes are major integrators of various mitogenenic and antimitogenic signals. Also a substrate for SMAD3, phosphorylating SMAD3 in a cell-cycle-dependent manner and repressing its transcriptional activity. Component of the ternary complex, cyclin D1/CDK4/CDKN1B, required for nuclear translocation and activity of the cyclin D-CDK4 complex. Exhibits transcriptional corepressor activity with INSM1 on the NEUROD1 and INS promoters in a cell cycle-independent manner. The chain is G1/S-specific cyclin-D1 (Ccnd1) from Mus musculus (Mouse).